Consider the following 216-residue polypeptide: Small ribosomal subunit protein uS3 (216 aa).

The KH type-2 domain occupies 38–106; that stretch reads IRGYLKKKLY…EIIINILEVR (69 aa).

Belongs to the universal ribosomal protein uS3 family. As to quaternary structure, part of the 30S ribosomal subunit. Forms a tight complex with proteins S10 and S14.

Binds the lower part of the 30S subunit head. Binds mRNA in the 70S ribosome, positioning it for translation. The sequence is that of Small ribosomal subunit protein uS3 from Syntrophus aciditrophicus (strain SB).